The chain runs to 278 residues: tRNA pseudouridine synthase A (278 aa).

Asp52 (nucleophile) is an active-site residue. A substrate-binding site is contributed by Tyr110. The interval 259–278 is disordered; it reads SKRQNGTTKVEQPSSYVHEE. The span at 261 to 278 shows a compositional bias: polar residues; sequence RQNGTTKVEQPSSYVHEE.

Belongs to the tRNA pseudouridine synthase TruA family. Homodimer.

It catalyses the reaction uridine(38/39/40) in tRNA = pseudouridine(38/39/40) in tRNA. Functionally, formation of pseudouridine at positions 38, 39 and 40 in the anticodon stem and loop of transfer RNAs. This is tRNA pseudouridine synthase A from Chloroflexus aurantiacus (strain ATCC 29366 / DSM 635 / J-10-fl).